The primary structure comprises 180 residues: MNAERCEFIAGNSLIEVIPSISDDRPIHLISGDIGPFEAGVPCRIPVWTAILMKRKHNCKVVAPQWMDVDELKKILTSETESQGLAKLPDHFFEISHMLVRDAREDIFEVEAVKSLVQDIYDRRDAKLRSSAIEFLRQNQTCHAQLDNVQLIEASSARATLEACRQMGAVVRNKHESTPL.

The protein belongs to the GINS2/PSF2 family. Component of the GINS complex which is a heterotetramer of gins1, gins2, gins3 and gins4.

It localises to the nucleus. Required for correct functioning of the GINS complex, a complex that plays an essential role in the initiation of DNA replication, and progression of DNA replication forks. GINS complex is a core component of CDC45-MCM-GINS (CMG) helicase, the molecular machine that unwinds template DNA during replication, and around which the replisome is built. The protein is Probable DNA replication complex GINS protein PSF2 (psf-2) of Caenorhabditis elegans.